Here is a 367-residue protein sequence, read N- to C-terminus: tRNA-specific 2-thiouridylase MnmA (367 aa).

Residues 11–18 and Met37 each bind ATP; that span reads GLSGGVDS. Positions 109-111 are interaction with target base in tRNA; sequence NPD. Cys114 (nucleophile) is an active-site residue. Cys114 and Cys211 are oxidised to a cystine. Gly139 is an ATP binding site. The segment at 161–163 is interaction with tRNA; it reads KDQ. Cys211 (cysteine persulfide intermediate) is an active-site residue.

This sequence belongs to the MnmA/TRMU family.

The protein localises to the cytoplasm. The catalysed reaction is S-sulfanyl-L-cysteinyl-[protein] + uridine(34) in tRNA + AH2 + ATP = 2-thiouridine(34) in tRNA + L-cysteinyl-[protein] + A + AMP + diphosphate + H(+). Its function is as follows. Catalyzes the 2-thiolation of uridine at the wobble position (U34) of tRNA, leading to the formation of s(2)U34. In Mycoplasma genitalium (strain ATCC 33530 / DSM 19775 / NCTC 10195 / G37) (Mycoplasmoides genitalium), this protein is tRNA-specific 2-thiouridylase MnmA.